A 466-amino-acid chain; its full sequence is L-seryl-tRNA(Sec) selenium transferase (466 aa).

Lys294 bears the N6-(pyridoxal phosphate)lysine mark.

It belongs to the SelA family. Requires pyridoxal 5'-phosphate as cofactor.

The protein resides in the cytoplasm. The enzyme catalyses L-seryl-tRNA(Sec) + selenophosphate + H(+) = L-selenocysteinyl-tRNA(Sec) + phosphate. Its pathway is aminoacyl-tRNA biosynthesis; selenocysteinyl-tRNA(Sec) biosynthesis; selenocysteinyl-tRNA(Sec) from L-seryl-tRNA(Sec) (bacterial route): step 1/1. Functionally, converts seryl-tRNA(Sec) to selenocysteinyl-tRNA(Sec) required for selenoprotein biosynthesis. The protein is L-seryl-tRNA(Sec) selenium transferase of Carboxydothermus hydrogenoformans (strain ATCC BAA-161 / DSM 6008 / Z-2901).